The following is a 138-amino-acid chain: Putative nickel-responsive regulator (138 aa).

Residues H78, H89, H91, and C97 each contribute to the Ni(2+) site.

The protein belongs to the transcriptional regulatory CopG/NikR family. The cofactor is Ni(2+).

Transcriptional regulator. The sequence is that of Putative nickel-responsive regulator from Thermococcus onnurineus (strain NA1).